The following is a 432-amino-acid chain: Adenylosuccinate synthetase (432 aa).

Residues 13-19 (GDEGKGK) and 41-43 (GHT) contribute to the GTP site. The active-site Proton acceptor is the Asp14. Mg(2+)-binding residues include Asp14 and Gly41. Residues 14 to 17 (DEGK), 39 to 42 (NAGH), Thr130, Arg144, Gln225, Thr240, and Arg304 each bind IMP. His42 acts as the Proton donor in catalysis. Substrate is bound at residue 300–306 (AVTGRPR). Residues Arg306, 332 to 334 (KLD), and 415 to 417 (STG) contribute to the GTP site.

It belongs to the adenylosuccinate synthetase family. Homodimer. It depends on Mg(2+) as a cofactor.

It localises to the cytoplasm. It catalyses the reaction IMP + L-aspartate + GTP = N(6)-(1,2-dicarboxyethyl)-AMP + GDP + phosphate + 2 H(+). Its pathway is purine metabolism; AMP biosynthesis via de novo pathway; AMP from IMP: step 1/2. Plays an important role in the de novo pathway of purine nucleotide biosynthesis. Catalyzes the first committed step in the biosynthesis of AMP from IMP. The polypeptide is Adenylosuccinate synthetase (Histophilus somni (strain 129Pt) (Haemophilus somnus)).